We begin with the raw amino-acid sequence, 359 residues long: Type-1 angiotensin II receptor (359 aa).

At 1–25 (MVPNYSTEETVKRIHVDCPVSGRHS) the chain is on the extracellular side. N-linked (GlcNAc...) asparagine glycosylation is present at asparagine 4. An angiotensin II-binding site is contributed by aspartate 17. 2 disulfides stabilise this stretch: cysteine 18–cysteine 274 and cysteine 101–cysteine 180. The helical transmembrane segment at 26 to 55 (YIYIMVPTVYSIIFIIGIFGNSLVVIVIYC) threads the bilayer. Residues 56-61 (YMKLKT) lie on the Cytoplasmic side of the membrane. The helical transmembrane segment at 62 to 89 (VASIFLLNLALADLCFLITLPLWAAYTA) threads the bilayer. Topologically, residues 90 to 98 (MEYQWPFGN) are extracellular. A helical membrane pass occupies residues 99–125 (CLCKLASAGISFNLYASVFLLTCLSID). Over 126-141 (RYLAIVHPVKSRIRRT) the chain is Cytoplasmic. A helical transmembrane segment spans residues 142–165 (MFVARVTCIVIWLLAGVASLPVII). The Extracellular portion of the chain corresponds to 166-190 (HRNIFFAENLNMTVCGFRYDNNNTT). Arginine 167 lines the angiotensin II pocket. An N-linked (GlcNAc...) asparagine glycan is attached at asparagine 176. Phenylalanine 182 and tyrosine 184 together coordinate angiotensin II. 2 N-linked (GlcNAc...) asparagine glycosylation sites follow: asparagine 187 and asparagine 188. The helical transmembrane segment at 191–216 (LRVGLGLSKNLLGFLIPFLIILTSYT) threads the bilayer. Lysine 199 contacts angiotensin II. The Cytoplasmic portion of the chain corresponds to 217–239 (LIWKTLKKAYQIQRNKTRNDDIF). The chain crosses the membrane as a helical span at residues 240-268 (KMIVAIVFFFFFSWIPHQVFTFLDVLIQL). The Extracellular portion of the chain corresponds to 269-278 (HVITDCKITD). The chain crosses the membrane as a helical span at residues 279 to 304 (IVDTAMPFTICIAYFNNCLNPFFYVF). Residues 305-359 (FGKNFKKYFLQLIKYIPPNVSTHPSLTTKMSSLSYRPPENIRLPTKKTAGSFDAE) lie on the Cytoplasmic side of the membrane.

The protein belongs to the G-protein coupled receptor 1 family. C-terminal Ser or Thr residues may be phosphorylated.

Its subcellular location is the cell membrane. Functionally, receptor for angiotensin II, a vasoconstricting peptide, which acts as a key regulator of blood pressure and sodium retention by the kidney. The activated receptor in turn couples to G-alpha proteins G(q) (GNAQ, GNA11, GNA14 or GNA15) and thus activates phospholipase C and increases the cytosolic Ca(2+) concentrations, which in turn triggers cellular responses such as stimulation of protein kinase C. The polypeptide is Type-1 angiotensin II receptor (AGTR1) (Gallus gallus (Chicken)).